A 219-amino-acid chain; its full sequence is Flagellar biosynthetic protein FliZ (219 aa).

The N-terminal stretch at 1 to 26 (MKKSQYFIVFICFFVLFSVHPIAAAA) is a signal peptide. Residues 41–61 (KDEKTADQSEQKKEKTTKTAD) are compositionally biased toward basic and acidic residues. A disordered region spans residues 41–62 (KDEKTADQSEQKKEKTTKTADE). A helical membrane pass occupies residues 71-96 (VSAFDFVKMIFALLFVIVLIYGLVKL). Basic and acidic residues predominate over residues 200–212 (LEELKQNRSEGKK). Positions 200–219 (LEELKQNRSEGKKKGPRHHE) are disordered.

Its subcellular location is the cell membrane. In terms of biological role, may be a structural component of the flagellum that anchors the rod to the membrane. The protein is Flagellar biosynthetic protein FliZ (fliZ) of Bacillus subtilis (strain 168).